The sequence spans 254 residues: Probable phosphoglycerate mutase 4 (254 aa).

Substrate contacts are provided by residues 10 to 17 and 23 to 24; these read RHGESTWN and SC. Histidine 11 serves as the catalytic Tele-phosphohistidine intermediate. 2 positions are modified to phosphoserine: serine 14 and serine 23. Tyrosine 26 is modified (phosphotyrosine). Position 31 is a phosphoserine (serine 31). Substrate is bound by residues arginine 62, 89 to 92, and lysine 100; that span reads ERHY. The Proton donor/acceptor role is filled by glutamate 89. Lysine 106 bears the N6-acetyllysine mark. Position 116 to 117 (116 to 117) interacts with substrate; that stretch reads RR. The residue at position 118 (serine 118) is a Phosphoserine. Residue 187–188 participates in substrate binding; sequence GN. Lysine 251 bears the N6-acetyllysine; alternate mark. At lysine 251 the chain carries N6-succinyllysine; alternate. 2 positions are modified to N6-acetyllysine: lysine 253 and lysine 254.

It belongs to the phosphoglycerate mutase family. BPG-dependent PGAM subfamily.

The enzyme catalyses (2R)-2-phosphoglycerate = (2R)-3-phosphoglycerate. It carries out the reaction (2R)-3-phospho-glyceroyl phosphate = (2R)-2,3-bisphosphoglycerate + H(+). This chain is Probable phosphoglycerate mutase 4 (PGAM4), found in Pan troglodytes (Chimpanzee).